We begin with the raw amino-acid sequence, 144 residues long: Large ribosomal subunit protein uL16 (144 aa).

It belongs to the universal ribosomal protein uL16 family. As to quaternary structure, part of the 50S ribosomal subunit.

Functionally, binds 23S rRNA and is also seen to make contacts with the A and possibly P site tRNAs. The sequence is that of Large ribosomal subunit protein uL16 from Bacillus cereus (strain ATCC 10987 / NRS 248).